The chain runs to 503 residues: Galactose/methyl galactoside import ATP-binding protein MglA 2 (503 aa).

ABC transporter domains lie at 11–246 (LEMT…VGRE) and 257–503 (TPKE…SRYL). 43 to 50 (GENGAGKS) provides a ligand contact to ATP.

This sequence belongs to the ABC transporter superfamily. Galactose/methyl galactoside importer (TC 3.A.1.2.3) family. In terms of assembly, the complex is composed of one ATP-binding protein (MglA), two transmembrane proteins (MglC) and a solute-binding protein (MglB).

It localises to the cell inner membrane. It carries out the reaction D-galactose(out) + ATP + H2O = D-galactose(in) + ADP + phosphate + H(+). It catalyses the reaction methyl beta-D-galactoside(out) + ATP + H2O = methyl beta-D-galactoside(in) + ADP + phosphate + H(+). Its function is as follows. Part of the ABC transporter complex MglABC involved in galactose/methyl galactoside import. Responsible for energy coupling to the transport system. The chain is Galactose/methyl galactoside import ATP-binding protein MglA 2 from Photobacterium profundum (strain SS9).